A 293-amino-acid polypeptide reads, in one-letter code: Elongation factor Ts (293 aa).

Positions 79-82 are involved in Mg(2+) ion dislocation from EF-Tu; it reads TDFV.

The protein belongs to the EF-Ts family.

It is found in the cytoplasm. In terms of biological role, associates with the EF-Tu.GDP complex and induces the exchange of GDP to GTP. It remains bound to the aminoacyl-tRNA.EF-Tu.GTP complex up to the GTP hydrolysis stage on the ribosome. The sequence is that of Elongation factor Ts from Bacillus pumilus (strain SAFR-032).